We begin with the raw amino-acid sequence, 375 residues long: MGSAGARPALAAALLCLARLALGSPCPAVCQCPAAAPQCAPGVGLVPDGCGCCKVCAKQLNEDCSRTQPCDHTKGLECNFGASPAATNGICRAQSEGRPCEYNSKIYQNGESFQPNCKHQCTCIDGAVGCIPLCPQELSLPNLGCPSPRLVKVPGQCCEEWVCDESKDALEELEGFFSKEFGLDASEGELTRNNELIAIVKGGLKMLPVFGSEPQSRAFENPKCIVQTTSWSQCSKTCGTGISTRVTNDNPDCKLIKETRICEVRPCGQPSYASLKKGKKCTKTKKSPSPVRFTYAGCSSVKKYRPKYCGSCVDGRCCTPQQTRTVKIRFRCDDGETFTKSVMMIQSCRCNYNCPHANEAYPFYRLVNDIHKFRD.

The N-terminal stretch at 1–22 (MGSAGARPALAAALLCLARLAL) is a signal peptide. An IGFBP N-terminal domain is found at 23-94 (GSPCPAVCQC…AATNGICRAQ (72 aa)). 6 cysteine pairs are disulfide-bonded: Cys-26–Cys-50, Cys-30–Cys-52, Cys-32–Cys-53, Cys-39–Cys-56, Cys-64–Cys-78, and Cys-70–Cys-91. One can recognise a VWFC domain in the interval 98 to 164 (RPCEYNSKIY…GQCCEEWVCD (67 aa)). The TSP type-1 domain maps to 223–268 (KCIVQTTSWSQCSKTCGTGISTRVTNDNPDCKLIKETRICEVRPCG). The segment at 274 to 310 (SLKKGKKCTKTKKSPSPVRFTYAGCSSVKKYRPKYCG) is heparin-binding. 5 cysteine pairs are disulfide-bonded: Cys-281–Cys-318, Cys-298–Cys-332, Cys-309–Cys-348, Cys-312–Cys-350, and Cys-317–Cys-354. The CTCK domain maps to 281–355 (CTKTKKSPSP…QSCRCNYNCP (75 aa)).

It belongs to the CCN family.

Its subcellular location is the secreted. Probable secreted regulatory protein. The sequence is that of CCN family member 1 (CCN1) from Gallus gallus (Chicken).